Consider the following 400-residue polypeptide: Enoyl-[acyl-carrier-protein] reductase [NADH] (400 aa).

Residues 48–53 (GSSSGY), 74–75 (FE), 111–112 (DA), and 139–140 (LA) contribute to the NAD(+) site. Tyr225 contributes to the substrate binding site. The active-site Proton donor is the Tyr235. NAD(+) contacts are provided by residues Lys244 and 273 to 275 (VVT).

It belongs to the TER reductase family. Monomer.

It carries out the reaction a 2,3-saturated acyl-[ACP] + NAD(+) = a (2E)-enoyl-[ACP] + NADH + H(+). It participates in lipid metabolism; fatty acid biosynthesis. Involved in the final reduction of the elongation cycle of fatty acid synthesis (FAS II). Catalyzes the reduction of a carbon-carbon double bond in an enoyl moiety that is covalently linked to an acyl carrier protein (ACP). The polypeptide is Enoyl-[acyl-carrier-protein] reductase [NADH] (Aliivibrio salmonicida (strain LFI1238) (Vibrio salmonicida (strain LFI1238))).